The chain runs to 360 residues: Mannan endo-1,4-beta-mannosidase (360 aa).

Positions 1 to 24 are cleaved as a signal peptide; that stretch reads MLKKLAVCLSIVLLLLGAASPISA. The GH26 domain maps to 36–347; sequence QTTKDIMNWL…YQNSWTLNKG (312 aa). Substrate is bound at residue histidine 129. Catalysis depends on glutamate 191, which acts as the Proton donor. Tryptophan 196 and tyrosine 266 together coordinate substrate. Residue glutamate 290 is the Nucleophile of the active site.

It belongs to the glycosyl hydrolase 26 family. Homodimer.

The protein localises to the secreted. The enzyme catalyses Random hydrolysis of (1-&gt;4)-beta-D-mannosidic linkages in mannans, galactomannans and glucomannans.. Involved in the degradation of glucomannan. Catalyzes the endo hydrolysis of beta-1,4-linked mannan, galactomannan and glucomannan. The chain is Mannan endo-1,4-beta-mannosidase from Bacillus subtilis.